The sequence spans 342 residues: Uroporphyrinogen decarboxylase (342 aa).

Residues Arg-22 to Arg-26, Phe-41, Asp-72, Tyr-146, Ser-201, and His-317 each bind substrate.

It belongs to the uroporphyrinogen decarboxylase family. In terms of assembly, homodimer.

It is found in the cytoplasm. The enzyme catalyses uroporphyrinogen III + 4 H(+) = coproporphyrinogen III + 4 CO2. Its pathway is porphyrin-containing compound metabolism; protoporphyrin-IX biosynthesis; coproporphyrinogen-III from 5-aminolevulinate: step 4/4. Functionally, catalyzes the decarboxylation of four acetate groups of uroporphyrinogen-III to yield coproporphyrinogen-III. This Orientia tsutsugamushi (strain Boryong) (Rickettsia tsutsugamushi) protein is Uroporphyrinogen decarboxylase.